A 366-amino-acid polypeptide reads, in one-letter code: Aminomethyltransferase (366 aa).

The protein belongs to the GcvT family. As to quaternary structure, the glycine cleavage system is composed of four proteins: P, T, L and H.

The enzyme catalyses N(6)-[(R)-S(8)-aminomethyldihydrolipoyl]-L-lysyl-[protein] + (6S)-5,6,7,8-tetrahydrofolate = N(6)-[(R)-dihydrolipoyl]-L-lysyl-[protein] + (6R)-5,10-methylene-5,6,7,8-tetrahydrofolate + NH4(+). The glycine cleavage system catalyzes the degradation of glycine. This is Aminomethyltransferase from Bacillus cereus (strain B4264).